Reading from the N-terminus, the 206-residue chain is Undecaprenyl-diphosphatase (206 aa).

A run of 5 helical transmembrane segments spans residues 5-25 (YYWI…LIGG), 53-73 (FLSK…LLIF), 79-99 (IGIT…VSKY), 138-158 (VTLL…EAVL), and 164-184 (VYVG…GSWI).

It is found in the cell membrane. The enzyme catalyses di-trans,octa-cis-undecaprenyl diphosphate + H2O = di-trans,octa-cis-undecaprenyl phosphate + phosphate + H(+). The polypeptide is Undecaprenyl-diphosphatase (sepP) (Sulfolobus acidocaldarius (strain ATCC 33909 / DSM 639 / JCM 8929 / NBRC 15157 / NCIMB 11770)).